A 174-amino-acid chain; its full sequence is Secretory-abundant heat soluble protein 68234 (174 aa).

The N-terminal stretch at 1–19 (MARFLVALALFGVVAMTAA) is a signal peptide. The tract at residues 26-57 (EWSGKPWLGKFVAEVTDKSENWEAFVDALGLP) is SAHS-c1. The SAHS-c2 stretch occupies residues 72–100 (YKQGDHYHHIFALPDKNFEKDIEFTLGQE). An SAHS-c3 region spans residues 113-162 (KYSEDGEKLVADVSIPTKGKTIRSEYEVQGDQLIKTYKTGDIVAKKWFKK).

It belongs to the Secretory-abundant heat soluble protein (SAHS) family.

It localises to the secreted. Its function is as follows. Secreted heat soluble protein acting as a molecular shield in water-deficient condition. Tardigrade-specific intrinsically disordered proteins (TDPs) are essential for desiccation tolerance by forming non-crystalline amorphous solids upon desiccation, and this vitrified state mirrors their protective capabilities. This chain is Secretory-abundant heat soluble protein 68234, found in Hypsibius exemplaris (Freshwater tardigrade).